Consider the following 678-residue polypeptide: MGDSHVDTGATSTEAVAEEVSLFSMTDMILLSVLVGFLTYFFLFRKKKEEIPEFTKISTTTSSVKESSFVEKMKKTGRNIIVFYGSQTGTAEEFANRLSKDAHRYGMRGMAADPEEYDLADLSSLPEIDNSLAVFCMATYGEGDPTDNAQDFYDWLQETDLDLSGVKYAVFGLGNKTYEHFNSMGKYVDQRLEQLGAQRIFELGLGDDDGNLEEDFITWREQFWPAVCEFFGVEATGEESSIRQYELVLHADTDPAKVYTGEMGRLKSYENQKPPFDAKNPFLAAVTTNRKLNQGTERHLMHLELDISDSKIRYESGDHVAVYPANDSNLVNQLGKILGADLDVVMSLKNLDEESNKKHPFPCPTTYRTALTYYLDITNPPRTNVLYELAQYASEPSEQEQLHKMASSSGEGKELYLTWVVEARRHILAILQDYPSLRPPIDHLCELLPRLQARYYSIASSSKVHPNSVHICAVVVEYETKSGRINKGVATSWLQAKDPAGENGRRALVPMFVRKSQFRLPFKSTTPVIMVGPGTGVAPFIGFIQERAWLQQQGKEVGETLLYYGCRRSDEDYLYREELAQFHKDGTLTQLNVAFSREQAQKVYVQHLLKRDQEHLWKLIHEDGAHIYVCGDARNMARDVQNTFCNIAAELGGMEHTQAVDYVKKLMTKGRYSLDVWS.

Glycine 2 carries the post-translational modification N-acetylglycine. At 2–21 the chain is on the lumenal side; that stretch reads GDSHVDTGATSTEAVAEEVS. Residues 22–42 form a helical membrane-spanning segment; the sequence is LFSMTDMILLSVLVGFLTYFF. The Cytoplasmic portion of the chain corresponds to 43 to 678; that stretch reads LFRKKKEEIP…KGRYSLDVWS (636 aa). Serine 63 is subject to Phosphoserine. The 145-residue stretch at 80 to 224 folds into the Flavodoxin-like domain; that stretch reads IIVFYGSQTG…DFITWREQFW (145 aa). FMN-binding positions include 86–91, 138–141, 173–182, and aspartate 208; these read SQTGTA, ATYG, and LGNKTYEHFN. Positions 279 to 521 constitute an FAD-binding FR-type domain; it reads KNPFLAAVTT…FVRKSQFRLP (243 aa). Arginine 298 contacts NADP(+). FAD-binding positions include arginine 424, 454–457, 472–474, tyrosine 478, and 488–491; these read RYYS, CAV, and GVAT. Residues threonine 535, 596 to 597, 602 to 606, and aspartate 639 contribute to the NADP(+) site; these read SR and KVYVQ. Tryptophan 677 serves as a coordination point for FAD.

This sequence belongs to the NADPH--cytochrome P450 reductase family. The protein in the N-terminal section; belongs to the flavodoxin family. It in the C-terminal section; belongs to the flavoprotein pyridine nucleotide cytochrome reductase family. Requires FAD as cofactor. FMN is required as a cofactor.

It is found in the endoplasmic reticulum membrane. The catalysed reaction is 2 oxidized [cytochrome P450] + NADPH = 2 reduced [cytochrome P450] + NADP(+) + H(+). Its function is as follows. This enzyme is required for electron transfer from NADP to cytochrome P450 in microsomes. It can also provide electron transfer to heme oxygenase and cytochrome B5. The chain is NADPH--cytochrome P450 reductase from Cavia porcellus (Guinea pig).